The chain runs to 294 residues: Glyceraldehyde-3-phosphate dehydrogenase (294 aa).

NAD(+)-binding residues include D19, K63, and T105. D-glyceraldehyde 3-phosphate-binding positions include S134–T136, T165, T194–G195, and R217. Residue C135 is the Nucleophile of the active site.

Belongs to the glyceraldehyde-3-phosphate dehydrogenase family. In terms of assembly, homotetramer.

It localises to the cytoplasm. It carries out the reaction D-glyceraldehyde 3-phosphate + phosphate + NAD(+) = (2R)-3-phospho-glyceroyl phosphate + NADH + H(+). Its pathway is carbohydrate degradation; glycolysis; pyruvate from D-glyceraldehyde 3-phosphate: step 1/5. In terms of biological role, catalyzes the oxidative phosphorylation of glyceraldehyde 3-phosphate (G3P) to 1,3-bisphosphoglycerate (BPG) using the cofactor NAD. The first reaction step involves the formation of a hemiacetal intermediate between G3P and a cysteine residue, and this hemiacetal intermediate is then oxidized to a thioester, with concomitant reduction of NAD to NADH. The reduced NADH is then exchanged with the second NAD, and the thioester is attacked by a nucleophilic inorganic phosphate to produce BPG. In Serratia odorifera, this protein is Glyceraldehyde-3-phosphate dehydrogenase (gap).